A 97-amino-acid chain; its full sequence is uncharacterized protein (97 aa).

Residue serine 2 is modified to N-acetylserine.

This is an uncharacterized protein from Mycobacterium tuberculosis (strain ATCC 25618 / H37Rv).